The primary structure comprises 327 residues: Zinc transport protein ZntB (327 aa).

Topologically, residues 1–271 (MDVVAGKALQ…AMNRRTYTMS (271 aa)) are cytoplasmic. Residues 272–292 (LLAMVFLPTTFLTGLFGVNLG) form a helical membrane-spanning segment. Over 293–300 (GIPGNTDS) the chain is Periplasmic. The helical transmembrane segment at 301–321 (FGFATFCMMLVVLVLGVAWWL) threads the bilayer. The Cytoplasmic portion of the chain corresponds to 322-327 (KHSKWL).

The protein belongs to the CorA metal ion transporter (MIT) (TC 1.A.35) family.

The protein localises to the cell inner membrane. It catalyses the reaction Zn(2+)(out) + H(+)(out) = Zn(2+)(in) + H(+)(in). In terms of biological role, zinc transporter. Acts as a Zn(2+):proton symporter, which likely mediates zinc ion uptake. The polypeptide is Zinc transport protein ZntB (Yersinia enterocolitica serotype O:8 / biotype 1B (strain NCTC 13174 / 8081)).